Consider the following 122-residue polypeptide: Large ribosomal subunit protein uL14c (122 aa).

Belongs to the universal ribosomal protein uL14 family. Part of the 50S ribosomal subunit.

Its subcellular location is the plastid. The protein resides in the chloroplast. Functionally, binds to 23S rRNA. In Phaseolus vulgaris (Kidney bean), this protein is Large ribosomal subunit protein uL14c.